The primary structure comprises 417 residues: Serine hydroxymethyltransferase (417 aa).

Residues Leu-121 and 125 to 127 contribute to the (6S)-5,6,7,8-tetrahydrofolate site; that span reads GHL. Lys-229 is subject to N6-(pyridoxal phosphate)lysine. 355-357 is a binding site for (6S)-5,6,7,8-tetrahydrofolate; sequence SPF.

Belongs to the SHMT family. As to quaternary structure, homodimer. Pyridoxal 5'-phosphate is required as a cofactor.

It localises to the cytoplasm. The catalysed reaction is (6R)-5,10-methylene-5,6,7,8-tetrahydrofolate + glycine + H2O = (6S)-5,6,7,8-tetrahydrofolate + L-serine. It functions in the pathway one-carbon metabolism; tetrahydrofolate interconversion. Its pathway is amino-acid biosynthesis; glycine biosynthesis; glycine from L-serine: step 1/1. Its function is as follows. Catalyzes the reversible interconversion of serine and glycine with tetrahydrofolate (THF) serving as the one-carbon carrier. This reaction serves as the major source of one-carbon groups required for the biosynthesis of purines, thymidylate, methionine, and other important biomolecules. Also exhibits THF-independent aldolase activity toward beta-hydroxyamino acids, producing glycine and aldehydes, via a retro-aldol mechanism. The chain is Serine hydroxymethyltransferase from Shewanella baltica (strain OS195).